We begin with the raw amino-acid sequence, 325 residues long: Tagatose 1,6-diphosphate aldolase (325 aa).

Belongs to the aldolase LacD family.

It carries out the reaction D-tagatofuranose 1,6-bisphosphate = D-glyceraldehyde 3-phosphate + dihydroxyacetone phosphate. It participates in carbohydrate metabolism; D-tagatose 6-phosphate degradation; D-glyceraldehyde 3-phosphate and glycerone phosphate from D-tagatose 6-phosphate: step 2/2. In Staphylococcus epidermidis (strain ATCC 35984 / DSM 28319 / BCRC 17069 / CCUG 31568 / BM 3577 / RP62A), this protein is Tagatose 1,6-diphosphate aldolase.